We begin with the raw amino-acid sequence, 314 residues long: Replication initiation protein (314 aa).

A compositionally biased stretch (basic and acidic residues) spans 1-18 (MSKKAEEIQAKQSLEKEN). The segment at 1–25 (MSKKAEEIQAKQSLEKENSNFSKTG) is disordered.

The protein belongs to the plasmid replication initiation factor family.

Functionally, this protein is probably a specific topoisomerase involved in initiating replication. This protein is specifically required and may be rate-limiting for replication of the plasmid in vivo. In Staphylococcus aureus, this protein is Replication initiation protein (repE).